Consider the following 644-residue polypeptide: MSSHDDDHTPLLISDPSVNKPFRSRTPSPEREYCSDCPLQAKGSACNGNSHSLKHETNGASSSNNNVAKSSSHDSFKAKPKNYDSTSNSNEPISFNEPDSSNSHHNNESICNNDNCCREIARRRSLSPLLILPLNFINAFSWGMIEIPLLFLLRQELCAIHYNLDPTQLSPDDPICRLAEITTGVSKVRAAFGSLAAFLGLFSTAYYGTMGDIYGRRLVLFITVSFLLLGDLWLLYQSYAPKHPYFVLFAAALKGLGGYISTVVASQNSFVADCSKTEFRAWYLGLNFAAYHLGTALGPSLSGFIVQYTPHMYYVFYITSTFWIIYLLYVWLILPESLDVSESKEQQNKISGFSSIWRSCLEPLIILWPRSLCTEESCEFHQYDINADTHAGRRHWDVLLAAILISLTLLGAGSMGLLPLYTDYKFGWGPMKASLILSTDSFASSITLVALFPLLSKVIEKIIEKLYSSEGLFEDPSRADNTSSLQGIRNVFSYLVRPGYSRSSILRGRTADEKYTIVKRDVWNAQLGYAIALSAAVLLAVAKSDVALFTAVIIQAISNMVVPCVQSIALNGVQSEYNGRVLAAFAVFEAVALIIRGPIYAFVYTESMKVSYPNMIFFLSAVIYGCCFIIIFFMRLYRPLNRKR.

2 disordered regions span residues 1 to 35 (MSSHDDDHTPLLISDPSVNKPFRSRTPSPEREYCS) and 48 to 106 (GNSH…SHHN). S28 is modified (phosphoserine). Over residues 58–70 (NGASSSNNNVAKS) the composition is skewed to low complexity. Residues 83 to 106 (YDSTSNSNEPISFNEPDSSNSHHN) are compositionally biased toward polar residues. 12 helical membrane-spanning segments follow: residues 131–151 (ILPLNFINAFSWGMIEIPLLF), 190–210 (AAFGSLAAFLGLFSTAYYGTM), 218–238 (LVLFITVSFLLLGDLWLLYQS), 245–265 (YFVLFAAALKGLGGYISTVVA), 286–306 (LNFAAYHLGTALGPSLSGFIV), 314–334 (YVFYITSTFWIIYLLYVWLIL), 398–418 (VLLAAILISLTLLGAGSMGLL), 435–455 (LILSTDSFASSITLVALFPLL), 522–542 (VWNAQLGYAIALSAAVLLAVA), 546–566 (VALFTAVIIQAISNMVVPCVQ), 583–603 (AAFAVFEAVALIIRGPIYAFV), and 614–634 (NMIFFLSAVIYGCCFIIIFFM).

It is found in the membrane. This is an uncharacterized protein from Schizosaccharomyces pombe (strain 972 / ATCC 24843) (Fission yeast).